The sequence spans 676 residues: Polyunsaturated fatty acid lipoxygenase ALOX15B (676 aa).

A PLAT domain is found at Ala2 to Lys124. Ca(2+) contacts are provided by Gly15, Gly17, Asp39, Asn40, Gly42, Glu44, Asp85, and Ala86. The 552-residue stretch at Val125 to Ile676 folds into the Lipoxygenase domain. 4 residues coordinate Fe cation: His373, His378, His553, and Ile676.

It belongs to the lipoxygenase family. Fe cation serves as cofactor. As to expression, expressed in hair, prostate, lung, ovary, lymph node, spinal cord and cornea.

The protein resides in the nucleus. Its subcellular location is the cytoplasm. It is found in the cytosol. It localises to the cell membrane. The protein localises to the cytoskeleton. The protein resides in the membrane. Its subcellular location is the cell junction. It is found in the adherens junction. It localises to the focal adhesion. The catalysed reaction is (5Z,8Z,11Z,14Z)-eicosatetraenoate + O2 = (15S)-hydroperoxy-(5Z,8Z,11Z,13E)-eicosatetraenoate. It catalyses the reaction (9Z,12Z)-octadecadienoate + O2 = 13-hydroperoxy-(9Z,11E)-octadecadienoate. The enzyme catalyses (5S)-hydroxy-(6E,8Z,11Z,14Z)-eicosatetraenoate + O2 = (5S)-hydroxy-(15S)-hydroperoxy-(6E,8Z,11Z,13E)-eicosatetraenoate. It carries out the reaction (5Z,8Z,11Z,14Z)-eicosatetraenoate + O2 = 5-hydroperoxy-(6E,8Z,11Z,14Z)-eicosatetraenoate. The catalysed reaction is (5S,6R)-dihydroxy-(7E,9E,11Z,14Z)-eicosatetraenoate + O2 = (5S,6R)-dihydroxy-(15S)-hydroperoxy-(7E,9E,11Z,13E)-eicosatetraenoate. It catalyses the reaction (5S)-hydroperoxy-(6E,8Z,11Z,14Z)-eicosatetraenoate + O2 = (5S,15S)-dihydroperoxy-(6E,8Z,11Z,13E)-eicosatetraenoate. The enzyme catalyses 2-(5Z,8Z,11Z,14Z-eicosatetraenoyl)-glycerol + O2 = 2-[15(S)-hydroperoxy-(5Z,8Z,11Z,13E)-eicosatetraenoyl]-glycerol. It carries out the reaction (8S)-hydroperoxy-(5Z,9E,11Z,14Z)-eicosatetraenoate + O2 = (8S,15S)-dihydroperoxy-(5Z,9E,11Z,13E)-eicosatetraenoate. The catalysed reaction is N-(5Z,8Z,11Z,14Z)-eicosatetraenoyl-L-alanine + O2 = N-(15S)-hydroperoxy-(5Z,8Z,11Z,13E)-eicosatetraenoyl-alanine. It catalyses the reaction N-(5Z,8Z,11Z,14Z)-eicosatetraenoyl-gamma-aminobutanoate + O2 = N-(15S)-hydroperoxy-(5Z,8Z,11Z,13E)-eicosatetraenoyl-gamma-aminobutanoate. The enzyme catalyses N-(5Z,8Z,11Z,14Z)-eicosatetraenoyl-glycine + O2 = N-(15S)-hydroperoxy-(5Z,8Z,11Z,13E)-eicosatetraenoyl-glycine. It carries out the reaction N-(5Z,8Z,11Z,14Z)-eicosatetraenoyl-taurine + O2 = N-(15S)-hydroperoxy-(5Z,8Z,11Z,13E)-eicosatetraenoyl-taurine. The catalysed reaction is 2-(5Z,8Z,11Z,14Z-eicosatetraenoyl)-glycerol + O2 = 2-[12-hydroperoxy-(5Z,8Z,10E,14Z)-eicosatetraenoyl]-glycerol. It catalyses the reaction 1-octadecanoyl-2-(5Z,8Z,11Z,14Z-eicosatetraenoyl)-sn-glycero-3-phosphocholine + O2 = 1-octadecanoyl-2-(15-hydroperoxy-5Z,8Z,11Z,13E-eicosatetraenoyl)-sn-glycero-3-phosphocholine. The enzyme catalyses a 1-acyl-2-(5Z,8Z,11Z,14Z-eicosatetraenoyl)-sn-glycero-3-phospho-(1D-myo-inositol) + O2 = a 1-acyl-2-(15-hydroperoxy-5Z,8Z,11Z,13E-eicosatetraenoyl)-sn-glycero-3-phospho-(1D-myo-inositol). It carries out the reaction a 1-acyl-2-(8Z,11Z,14Z-eicosatrienoyl)-sn-glycero-3-phospho-(1D-myo-inositol) + O2 = a 1-acyl-2-(15-hydroperoxy-8Z,11Z,13E-eicosatrienoyl)-sn-glycero-3-phospho-(1D-myo-inositol). The catalysed reaction is 1-octadecanoyl-2-(5Z,8Z,11Z,14Z)-eicosatetraenoyl-sn-glycero-3-phosphoethanolamine + O2 = 1-octadecanoyl-2-(15-hydroperoxy-5Z,8Z,11Z,13E-eicosatetraenoyl)-sn-glycero-3-phosphoethanolamine. It catalyses the reaction 1-octadecanoyl-2-(5Z,8Z,11Z,14Z-eicosatetraenoyl)-sn-glycero-3-phospho-(1D-myo-inositol) + O2 = 1-octadecanoyl-2-(15-hydroperoxy-5Z,8Z,11Z,13E-eicosatetraenoyl)-sn-glycero-3-phospho-(1D-myo-inositol). The enzyme catalyses (8Z,11Z,14Z)-eicosatrienoate + O2 = 15-hydroperoxy-(8Z,11Z,13E)-eicosatrienoate. It carries out the reaction (7S)-hydroperoxy-(4Z,8E,10Z,13Z,16Z,19Z)-docosahexaenoate + O2 = (7S,17S)-dihydroperoxy-(4Z,8E,10Z,13Z,15E,19Z)-docosahexaenoate. The catalysed reaction is (5Z,8Z,11Z,14Z)-eicosatetraenoate + O2 = 15-hydroperoxy-(5Z,8Z,11Z,13E)-eicosatetraenoate. The protein operates within lipid metabolism; hydroperoxy eicosatetraenoic acid biosynthesis. In terms of biological role, non-heme iron-containing dioxygenase that catalyzes the stereo-specific peroxidation of free and esterified polyunsaturated fatty acids (PUFAs) generating a spectrum of bioactive lipid mediators. It inserts peroxyl groups at C15 of arachidonate ((5Z,8Z,11Z,14Z)-eicosatetraenoate) producing (15S)-hydroperoxyeicosatetraenoate/(15S)-HPETE. Also peroxidizes linoleate ((9Z,12Z)-octadecadienoate) to 13-hydroperoxyoctadecadienoate/13-HPODE. Oxygenates arachidonyl derivatives such as 2-arachidonoylglycerol (2-AG) leading to the production and extracellular release of 15-hydroxyeicosatetraenoyl glycerol (15-HETE-G) that acts as a peroxisome proliferator-activated receptor alpha agonist. Has the ability to efficiently class-switch ALOX5 pro-inflammatory mediators into anti-inflammatory intermediates. Participates in the sequential oxidations of DHA ((4Z,7Z,10Z,13Z,16Z,19Z)-docosahexaenoate) to generate specialized pro-resolving mediators (SPMs) resolvin D5 ((7S,17S)-diHPDHA), which can actively down-regulate the immune response and have anti-aggregation properties with platelets. In addition to free PUFAs hydrolyzed from phospholipids, it directly oxidizes PUFAs esterified to membrane-bound phospholipids. Has no detectable 8S-lipoxygenase activity on arachidonate but reacts with (8S)-HPETE to produce (8S,15S)-diHPETE. May regulate progression through the cell cycle and cell proliferation. May also regulate cytokine secretion by macrophages and therefore play a role in the immune response. May also regulate macrophage differentiation into proatherogenic foam cells. Does not convert arachidonic acid to 15S-hydroperoxyeicosatetraenoic acid/(15S)-HPETE. The protein is Polyunsaturated fatty acid lipoxygenase ALOX15B of Homo sapiens (Human).